A 106-amino-acid chain; its full sequence is Small ribosomal subunit protein uS10 (106 aa).

It belongs to the universal ribosomal protein uS10 family. As to quaternary structure, part of the 30S ribosomal subunit.

Its function is as follows. Involved in the binding of tRNA to the ribosomes. The chain is Small ribosomal subunit protein uS10 from Solibacter usitatus (strain Ellin6076).